A 272-amino-acid chain; its full sequence is 1,4-dihydroxy-2-naphthoyl-CoA synthase (272 aa).

Substrate is bound by residues Arg-33, 72–76 (SGGDQ), Tyr-84, 116–120 (YAIGG), Thr-142, Ser-148, Tyr-245, and Lys-260. Residue 141–143 (QTG) participates in hydrogencarbonate binding.

The protein belongs to the enoyl-CoA hydratase/isomerase family. MenB subfamily. Requires hydrogencarbonate as cofactor.

It carries out the reaction 2-succinylbenzoyl-CoA + H(+) = 1,4-dihydroxy-2-naphthoyl-CoA + H2O. The protein operates within quinol/quinone metabolism; 1,4-dihydroxy-2-naphthoate biosynthesis; 1,4-dihydroxy-2-naphthoate from chorismate: step 6/7. Its pathway is quinol/quinone metabolism; menaquinone biosynthesis. Converts o-succinylbenzoyl-CoA (OSB-CoA) to 1,4-dihydroxy-2-naphthoyl-CoA (DHNA-CoA). The polypeptide is 1,4-dihydroxy-2-naphthoyl-CoA synthase (Staphylococcus epidermidis (strain ATCC 12228 / FDA PCI 1200)).